The chain runs to 473 residues: Protein translocase subunit SecD (473 aa).

The next 6 membrane-spanning stretches (helical) occupy residues 5-25 (VLVKWAVILVALFASVYLLYP), 316-336 (ASLYGIVIILILMAIYYKSGG), 337-357 (IISNIALILNLVFLLAAMAAF), 364-384 (PGIAGIILSLAMAIDANVLIL), 409-429 (WSAIFDSNFTSWIVALFLFQF), and 436-456 (GFAVTLTLGLLIGVFTSVFVT).

Belongs to the SecD/SecF family. SecD subfamily. As to quaternary structure, forms a complex with SecF. Part of the essential Sec protein translocation apparatus which comprises SecA, SecYEG and auxiliary proteins SecDF. Other proteins may also be involved.

It localises to the cell inner membrane. Functionally, part of the Sec protein translocase complex. Interacts with the SecYEG preprotein conducting channel. SecDF uses the proton motive force (PMF) to complete protein translocation after the ATP-dependent function of SecA. The protein is Protein translocase subunit SecD of Elusimicrobium minutum (strain Pei191).